The chain runs to 142 residues: Galactose-6-phosphate isomerase subunit LacA 2 (142 aa).

Belongs to the LacAB/RpiB family. Heteromultimeric protein consisting of LacA and LacB.

It catalyses the reaction aldehydo-D-galactose 6-phosphate = keto-D-tagatose 6-phosphate. Its pathway is carbohydrate metabolism; D-galactose 6-phosphate degradation; D-tagatose 6-phosphate from D-galactose 6-phosphate: step 1/1. This Streptococcus pyogenes serotype M1 protein is Galactose-6-phosphate isomerase subunit LacA 2.